Consider the following 224-residue polypeptide: Phosphoribosyltransferase domain-containing protein 1 (224 aa).

E140 and D141 together coordinate Mg(2+). GMP is bound by residues 140-148 (EDIINTGRT), K172, 193-194 (FV), and D200. D200 is a Mg(2+) binding site.

The protein belongs to the purine/pyrimidine phosphoribosyltransferase family.

This chain is Phosphoribosyltransferase domain-containing protein 1 (prtfdc1), found in Xenopus tropicalis (Western clawed frog).